The chain runs to 768 residues: Phosphoribosylformylglycinamidine synthase subunit PurL (768 aa).

Histidine 48 is an active-site residue. ATP-binding residues include tyrosine 51 and lysine 90. Glutamate 92 provides a ligand contact to Mg(2+). Substrate is bound by residues 93–96 (SHNH) and arginine 115. Histidine 94 (proton acceptor) is an active-site residue. Aspartate 116 contacts Mg(2+). Substrate is bound at residue glutamine 239. Aspartate 267 provides a ligand contact to Mg(2+). 311–313 (ESQ) serves as a coordination point for substrate. ATP is bound by residues aspartate 507 and glycine 544. Residue asparagine 545 participates in Mg(2+) binding. Serine 547 is a substrate binding site.

Belongs to the FGAMS family. As to quaternary structure, monomer. Part of the FGAM synthase complex composed of 1 PurL, 1 PurQ and 2 PurS subunits.

The protein localises to the cytoplasm. The enzyme catalyses N(2)-formyl-N(1)-(5-phospho-beta-D-ribosyl)glycinamide + L-glutamine + ATP + H2O = 2-formamido-N(1)-(5-O-phospho-beta-D-ribosyl)acetamidine + L-glutamate + ADP + phosphate + H(+). Its pathway is purine metabolism; IMP biosynthesis via de novo pathway; 5-amino-1-(5-phospho-D-ribosyl)imidazole from N(2)-formyl-N(1)-(5-phospho-D-ribosyl)glycinamide: step 1/2. Its function is as follows. Part of the phosphoribosylformylglycinamidine synthase complex involved in the purines biosynthetic pathway. Catalyzes the ATP-dependent conversion of formylglycinamide ribonucleotide (FGAR) and glutamine to yield formylglycinamidine ribonucleotide (FGAM) and glutamate. The FGAM synthase complex is composed of three subunits. PurQ produces an ammonia molecule by converting glutamine to glutamate. PurL transfers the ammonia molecule to FGAR to form FGAM in an ATP-dependent manner. PurS interacts with PurQ and PurL and is thought to assist in the transfer of the ammonia molecule from PurQ to PurL. The sequence is that of Phosphoribosylformylglycinamidine synthase subunit PurL from Parasynechococcus marenigrum (strain WH8102).